The primary structure comprises 94 residues: CRISPR-associated endoribonuclease Cas2 (94 aa).

Mg(2+) is bound at residue Asp10.

Belongs to the CRISPR-associated endoribonuclease Cas2 protein family. As to quaternary structure, homodimer, forms a heterotetramer with a Cas1 homodimer. The cofactor is Mg(2+).

In terms of biological role, CRISPR (clustered regularly interspaced short palindromic repeat), is an adaptive immune system that provides protection against mobile genetic elements (viruses, transposable elements and conjugative plasmids). CRISPR clusters contain sequences complementary to antecedent mobile elements and target invading nucleic acids. CRISPR clusters are transcribed and processed into CRISPR RNA (crRNA). Functions as a ssRNA-specific endoribonuclease. Involved in the integration of spacer DNA into the CRISPR cassette. This Leptospira interrogans serogroup Icterohaemorrhagiae serovar Lai (strain 56601) protein is CRISPR-associated endoribonuclease Cas2.